Here is a 993-residue protein sequence, read N- to C-terminus: Glycine dehydrogenase (decarboxylating) (993 aa).

Lysine 715 is subject to N6-(pyridoxal phosphate)lysine.

This sequence belongs to the GcvP family. In terms of assembly, the glycine cleavage system is composed of four proteins: P, T, L and H. It depends on pyridoxal 5'-phosphate as a cofactor.

It catalyses the reaction N(6)-[(R)-lipoyl]-L-lysyl-[glycine-cleavage complex H protein] + glycine + H(+) = N(6)-[(R)-S(8)-aminomethyldihydrolipoyl]-L-lysyl-[glycine-cleavage complex H protein] + CO2. In terms of biological role, the glycine cleavage system catalyzes the degradation of glycine. The P protein binds the alpha-amino group of glycine through its pyridoxal phosphate cofactor; CO(2) is released and the remaining methylamine moiety is then transferred to the lipoamide cofactor of the H protein. This chain is Glycine dehydrogenase (decarboxylating), found in Xylella fastidiosa (strain Temecula1 / ATCC 700964).